The primary structure comprises 171 residues: Secreted thaumatin-like protein calA (171 aa).

An N-terminal signal peptide occupies residues 1-18 (MLFNKIISLAATLATASA). 2 N-linked (GlcNAc...) asparagine glycosylation sites follow: Asn37 and Asn141. 2 disulfides stabilise this stretch: Cys130-Cys157 and Cys135-Cys142.

Belongs to the thaumatin family.

It localises to the secreted. The protein resides in the extracellular space. It is found in the extracellular matrix. The protein localises to the cell wall. Functionally, secreted thaumatin-like protein that, with cetA, plays an essential role in early conidial germination with a possible role in cell wall remodeling. The polypeptide is Secreted thaumatin-like protein calA (Emericella nidulans (strain FGSC A4 / ATCC 38163 / CBS 112.46 / NRRL 194 / M139) (Aspergillus nidulans)).